The primary structure comprises 433 residues: Serine--tRNA ligase (433 aa).

Position 235–237 (235–237) interacts with L-serine; sequence TSE. 266 to 268 serves as a coordination point for ATP; that stretch reads RSE. Residue Glu-289 coordinates L-serine. 353–356 is an ATP binding site; sequence EISS. Residue Ser-388 participates in L-serine binding.

This sequence belongs to the class-II aminoacyl-tRNA synthetase family. Type-1 seryl-tRNA synthetase subfamily. In terms of assembly, homodimer. The tRNA molecule binds across the dimer.

It localises to the cytoplasm. It catalyses the reaction tRNA(Ser) + L-serine + ATP = L-seryl-tRNA(Ser) + AMP + diphosphate + H(+). The catalysed reaction is tRNA(Sec) + L-serine + ATP = L-seryl-tRNA(Sec) + AMP + diphosphate + H(+). Its pathway is aminoacyl-tRNA biosynthesis; selenocysteinyl-tRNA(Sec) biosynthesis; L-seryl-tRNA(Sec) from L-serine and tRNA(Sec): step 1/1. In terms of biological role, catalyzes the attachment of serine to tRNA(Ser). Is also able to aminoacylate tRNA(Sec) with serine, to form the misacylated tRNA L-seryl-tRNA(Sec), which will be further converted into selenocysteinyl-tRNA(Sec). This is Serine--tRNA ligase from Burkholderia cepacia (Pseudomonas cepacia).